The chain runs to 374 residues: Chaperone protein DnaJ (374 aa).

Positions 5-70 (DYYEVLGVER…SKRAAYDQYG (66 aa)) constitute a J domain. The CR-type zinc finger occupies 133-211 (GTTVNIRVPT…CHGEGRVEEY (79 aa)). Cys-146, Cys-149, Cys-163, Cys-166, Cys-185, Cys-188, Cys-199, and Cys-202 together coordinate Zn(2+). CXXCXGXG motif repeat units follow at residues 146–153 (CKPCDGSG), 163–170 (CPTCGGIG), 185–192 (CPRCHGQG), and 199–206 (CDSCHGEG).

Belongs to the DnaJ family. As to quaternary structure, homodimer. Requires Zn(2+) as cofactor.

It is found in the cytoplasm. Participates actively in the response to hyperosmotic and heat shock by preventing the aggregation of stress-denatured proteins and by disaggregating proteins, also in an autonomous, DnaK-independent fashion. Unfolded proteins bind initially to DnaJ; upon interaction with the DnaJ-bound protein, DnaK hydrolyzes its bound ATP, resulting in the formation of a stable complex. GrpE releases ADP from DnaK; ATP binding to DnaK triggers the release of the substrate protein, thus completing the reaction cycle. Several rounds of ATP-dependent interactions between DnaJ, DnaK and GrpE are required for fully efficient folding. Also involved, together with DnaK and GrpE, in the DNA replication of plasmids through activation of initiation proteins. In Pseudomonas fluorescens (strain ATCC BAA-477 / NRRL B-23932 / Pf-5), this protein is Chaperone protein DnaJ.